The primary structure comprises 37 residues: Large ribosomal subunit protein bL36 (37 aa).

The protein belongs to the bacterial ribosomal protein bL36 family.

This is Large ribosomal subunit protein bL36 from Rhodococcus erythropolis (strain PR4 / NBRC 100887).